We begin with the raw amino-acid sequence, 246 residues long: UDP-N-acetyl-D-mannosaminuronic acid transferase (246 aa).

Belongs to the glycosyltransferase 26 family.

The enzyme catalyses UDP-N-acetyl-alpha-D-mannosaminouronate + N-acetyl-alpha-D-glucosaminyl-di-trans,octa-cis-undecaprenyl diphosphate = beta-D-ManNAcA-(1-&gt;4)-alpha-D-GlcNAc-di-trans,octa-cis-undecaprenyl diphosphate + UDP + H(+). It functions in the pathway bacterial outer membrane biogenesis; enterobacterial common antigen biosynthesis. In terms of biological role, catalyzes the synthesis of Und-PP-GlcNAc-ManNAcA (Lipid II), the second lipid-linked intermediate involved in enterobacterial common antigen (ECA) synthesis. The protein is UDP-N-acetyl-D-mannosaminuronic acid transferase of Serratia proteamaculans (strain 568).